The following is a 279-amino-acid chain: Pantothenate synthetase (279 aa).

26 to 33 (MGNLHEGH) serves as a coordination point for ATP. The Proton donor role is filled by H33. (R)-pantoate is bound at residue Q57. Residue Q57 coordinates beta-alanine. 144-147 (GKKD) contacts ATP. Residue Q150 coordinates (R)-pantoate. ATP contacts are provided by residues V173 and 181–184 (LSSR).

The protein belongs to the pantothenate synthetase family. As to quaternary structure, homodimer.

Its subcellular location is the cytoplasm. It carries out the reaction (R)-pantoate + beta-alanine + ATP = (R)-pantothenate + AMP + diphosphate + H(+). It functions in the pathway cofactor biosynthesis; (R)-pantothenate biosynthesis; (R)-pantothenate from (R)-pantoate and beta-alanine: step 1/1. Catalyzes the condensation of pantoate with beta-alanine in an ATP-dependent reaction via a pantoyl-adenylate intermediate. The protein is Pantothenate synthetase of Burkholderia vietnamiensis (strain G4 / LMG 22486) (Burkholderia cepacia (strain R1808)).